The primary structure comprises 583 residues: uncharacterized protein (583 aa).

Over residues 1-38 the composition is skewed to polar residues; that stretch reads MGQGESIPSRQIQRDASMQAVSSESENINDSDRQNSGF. 4 disordered regions span residues 1-39, 53-124, 156-197, and 362-452; these read MGQGESIPSRQIQRDASMQAVSSESENINDSDRQNSGFS, GLRR…AIPQ, TQNN…TAIG, and NSGS…QTDH. Positions 70–80 are enriched in basic and acidic residues; that stretch reads GNRDRTTERSA. Low complexity predominate over residues 88–102; the sequence is SLLNRNSPSLRSLSP. Polar residues-rich tracts occupy residues 156-165, 172-191, 384-408, and 420-452; these read TQNNQSTLAS, VSSSGGQEMQDHGSVNNLES, LISSLVNSQNQTTSVSDNTGPNENV, and ASTATDVNGISDNNGSSTQQAPETRNNNSQTDH. The segment at 525–568 adopts an RING-type zinc-finger fold; the sequence is CLVCLSNFELNDECRRLKQCNHFFHRECIDQWLTSSQNSCPLCR. The residue at position 580 (serine 580) is a Phosphoserine.

The protein localises to the membrane. This is an uncharacterized protein from Schizosaccharomyces pombe (strain 972 / ATCC 24843) (Fission yeast).